The primary structure comprises 68 residues: Neuronal regeneration-related protein (68 aa).

The interval 21–54 is disordered; sequence MEGRLPKGRLPVPKEVNRKKNDETNAASLTPLGS. The span at 44 to 54 shows a compositional bias: polar residues; sequence TNAASLTPLGS.

Interacts with the latency-associated peptides (LAP) of TGFB1 and TGFB2; the interaction results in a decrease in TGFB autoinduction. Interacts with FLNA. In terms of processing, phosphorylated on Ser-59. Phosphorylation decreases stability and activity.

It localises to the cytoplasm. Functionally, may have roles in neural function and cellular differentiation. Ectopic expression promotes axonal regeneration, induces differentiation of fibroblast into myofibroblast, induces myofibroblast ameboid migration, augments motility of gliomas, and increases retinoic-acid regulation of lipid-droplet biogenesis. Down-regulates the expression of TGFB1 and TGFB2 but not of TGFB3. May play a role in the regulation of alveolar generation. This chain is Neuronal regeneration-related protein (NREP), found in Pongo abelii (Sumatran orangutan).